Reading from the N-terminus, the 537-residue chain is Extracellular exo-inulinase (537 aa).

The N-terminal stretch at 1-19 (MAPLSKALSVFMLMGITYA) is a signal peptide. Positions 40 and 41 each coordinate beta-D-fructose. The Nucleophile role is filled by D41. A glycan (N-linked (GlcNAc...) asparagine) is linked at N49. Q57 and W65 together coordinate beta-D-fructose. N-linked (GlcNAc...) asparagine glycosylation occurs at N67. Residue S103 coordinates beta-D-fructose. Residues N111 and N112 are each glycosylated (N-linked (GlcNAc...) asparagine). R188, D189, and E241 together coordinate beta-D-fructose. The active-site Proton donor/acceptor is E241. Residues N254 and N300 are each glycosylated (N-linked (GlcNAc...) asparagine). W335 contributes to the beta-D-fructose binding site. N-linked (GlcNAc...) asparagine glycans are attached at residues N398 and N430.

The protein belongs to the glycosyl hydrolase 32 family.

The protein localises to the secreted. The catalysed reaction is Hydrolysis of terminal, non-reducing (2-&gt;1)- and (2-&gt;6)-linked beta-D-fructofuranose residues in fructans.. In terms of biological role, exo-inulinase involved in utilization of the plant storage polymer inulin, consisting of fructooligosaccharides with a degree of polymerization (DP) value from 2 to 60. Splits off terminal fructose units successively from the non-reducing end of the inulin molecule, and also hydrolyzes levan, stachyose and raffinose. Hydrolyzes both beta-2,1- as well as beta-2,6-fructosyl linkages in fructooligosaccharides. This Aspergillus awamori (Black koji mold) protein is Extracellular exo-inulinase.